Consider the following 99-residue polypeptide: Integration host factor subunit beta (99 aa).

This sequence belongs to the bacterial histone-like protein family. In terms of assembly, heterodimer of an alpha and a beta chain.

This protein is one of the two subunits of integration host factor, a specific DNA-binding protein that functions in genetic recombination as well as in transcriptional and translational control. This Rhizobium etli (strain CIAT 652) protein is Integration host factor subunit beta.